The following is a 953-amino-acid chain: UvrABC system protein A (953 aa).

Residue 33 to 40 (GLSGSGKS) participates in ATP binding. ABC transporter domains follow at residues 320 to 599 (WGST…EESI) and 619 to 949 (GHDN…RYLK). 652 to 659 (GVSGSGKS) serves as a coordination point for ATP. The C4-type zinc finger occupies 752–778 (CEACQGDGLIKIEMHFLPDVYVKCDIC).

The protein belongs to the ABC transporter superfamily. UvrA family. In terms of assembly, forms a heterotetramer with UvrB during the search for lesions.

The protein localises to the cytoplasm. Its function is as follows. The UvrABC repair system catalyzes the recognition and processing of DNA lesions. UvrA is an ATPase and a DNA-binding protein. A damage recognition complex composed of 2 UvrA and 2 UvrB subunits scans DNA for abnormalities. When the presence of a lesion has been verified by UvrB, the UvrA molecules dissociate. This Rickettsia typhi (strain ATCC VR-144 / Wilmington) protein is UvrABC system protein A.